Here is a 364-residue protein sequence, read N- to C-terminus: Probable transcription factor At4g00390 (364 aa).

The tract at residues 1-149 (MTKKLDPPTA…STKRVKKDEE (149 aa)) is disordered. The segment covering 13–32 (SDEDDVETSEDDSSSSEEDE) has biased composition (acidic residues). A compositionally biased stretch (low complexity) spans 39-80 (ATTAAAPAKSTAVSAATPAKSTSVSAAAPSKSTAVSAAADSD). Residues 81–93 (SGSESETDSDSES) show a composition bias toward acidic residues.

Belongs to the GeBP family.

In Arabidopsis thaliana (Mouse-ear cress), this protein is Probable transcription factor At4g00390.